The sequence spans 542 residues: Probable folate-biopterin transporter 8, chloroplastic (542 aa).

Residues 1–78 (MERIMINPLL…GVSEFEETAR (78 aa)) constitute a chloroplast transit peptide. Residues 24–45 (LSSIHRQQQQQERQSNNNTLFM) form a disordered region. 12 helical membrane-spanning segments follow: residues 103–123 (FPWL…PSTL), 132–152 (LPMV…IGSG), 155–175 (VPYI…MGIF), 181–201 (VLPS…ITEV), 223–243 (ALMA…YLLL), 246–266 (PPKI…VVSL), 308–328 (LIWA…VFCY), 338–358 (SVIG…TVVY), 369–389 (PLIH…YILV), 404–424 (VLCF…PFAV), 446–466 (LCLS…LIGI), and 477–497 (GILI…LVPM). The segment at 506–542 (GKRGISKRSRRNRRVGRVVDKESVTYRRERESEEAQR) is disordered. The segment covering 509–521 (GISKRSRRNRRVG) has biased composition (basic residues). Residues 522-542 (RVVDKESVTYRRERESEEAQR) are compositionally biased toward basic and acidic residues.

This sequence belongs to the major facilitator superfamily. Folate-biopterin transporter (TC 2.A.71) family.

The protein localises to the plastid. Its subcellular location is the chloroplast membrane. Functionally, could mediate folate transport. This chain is Probable folate-biopterin transporter 8, chloroplastic, found in Arabidopsis thaliana (Mouse-ear cress).